Here is a 188-residue protein sequence, read N- to C-terminus: UPF0301 protein azo3459 (188 aa).

This sequence belongs to the UPF0301 (AlgH) family.

This chain is UPF0301 protein azo3459, found in Azoarcus sp. (strain BH72).